The primary structure comprises 274 residues: Beta-lysine N(6)-acetyltransferase (274 aa).

Residues Phe-123–Glu-274 enclose the N-acetyltransferase domain.

The protein belongs to the acetyltransferase family.

The catalysed reaction is (3S)-3,6-diaminohexanoate + acetyl-CoA = (3S)-6-acetamido-3-aminohexanoate + CoA + H(+). In terms of biological role, catalyzes the acetylation of beta-lysine to N6-acetyl-beta-lysine, a compatible solute produced by methanogenic archaea that helps cells to cope with salt stress. The sequence is that of Beta-lysine N(6)-acetyltransferase from Methanococcus maripaludis (strain DSM 14266 / JCM 13030 / NBRC 101832 / S2 / LL).